The sequence spans 318 residues: Mediator of RNA polymerase II transcription subunit 30 (318 aa).

Residues 1–13 are compositionally biased toward low complexity; it reads MWKYGQNQGNQGP. Disordered regions lie at residues 1–92 and 120–142; these read MWKY…QQQQ and GGGV…QNIP. Residues 14–33 show a composition bias toward gly residues; that stretch reads SSGGGGGGGPNMMPMGGFGM. Composition is skewed to low complexity over residues 34–55, 78–92, and 124–142; these read QHGN…QQMG, PGMS…QQQQ, and VPQQ…QNIP.

The protein belongs to the Mediator complex subunit 30 family. As to quaternary structure, component of the Mediator complex, which includes at least CDK8, MED4, MED6, MED11, MED14, MED17, MED18, MED20, MED21, MED22, MED27, MED28, MED30 and MED31.

Its subcellular location is the nucleus. Its function is as follows. Component of the Mediator complex, a coactivator involved in the regulated transcription of nearly all RNA polymerase II-dependent genes. Mediator functions as a bridge to convey information from gene-specific regulatory proteins to the basal RNA polymerase II transcription machinery. Mediator is recruited to promoters by direct interactions with regulatory proteins and serves as a scaffold for the assembly of a functional preinitiation complex with RNA polymerase II and the general transcription factors. The protein is Mediator of RNA polymerase II transcription subunit 30 (MED30) of Drosophila melanogaster (Fruit fly).